Consider the following 688-residue polypeptide: Potassium-transporting ATPase ATP-binding subunit (688 aa).

A run of 4 helical transmembrane segments spans residues 34-54 (PVMF…LAIL), 62-82 (ALFT…ANFA), 219-239 (VALT…TATL), and 260-280 (VLVA…LSAI). D313 (4-aspartylphosphate intermediate) is an active-site residue. ATP-binding positions include D350, E354, 383–390 (FSAQTRMS), and K401. Mg(2+) is bound by residues D524 and D528. 3 helical membrane passes run 594 to 614 (FAII…LNVM), 622 to 642 (AILS…PLAL), and 667 to 687 (GLLV…ALIM).

It belongs to the cation transport ATPase (P-type) (TC 3.A.3) family. Type IA subfamily. The system is composed of three essential subunits: KdpA, KdpB and KdpC.

The protein localises to the cell inner membrane. It carries out the reaction K(+)(out) + ATP + H2O = K(+)(in) + ADP + phosphate + H(+). Part of the high-affinity ATP-driven potassium transport (or Kdp) system, which catalyzes the hydrolysis of ATP coupled with the electrogenic transport of potassium into the cytoplasm. This subunit is responsible for energy coupling to the transport system and for the release of the potassium ions to the cytoplasm. This Yersinia enterocolitica serotype O:8 / biotype 1B (strain NCTC 13174 / 8081) protein is Potassium-transporting ATPase ATP-binding subunit.